An 87-amino-acid polypeptide reads, in one-letter code: U3-theraphotoxin-Hhn1a 5 (87 aa).

Residues 1–24 (MVNMKASMFLTFAGLVLLFVVCYA) form the signal peptide. A propeptide spanning residues 25 to 52 (SESEEKEFPKEMLSSIFAVDNDFKQEER) is cleaved from the precursor. 3 disulfides stabilise this stretch: cysteine 54/cysteine 67, cysteine 61/cysteine 72, and cysteine 66/cysteine 79.

The protein belongs to the neurotoxin 10 (Hwtx-1) family. 51 (Hntx-8) subfamily. Hntx-8 sub-subfamily. As to expression, expressed by the venom gland.

It localises to the secreted. Ion channel inhibitor. The protein is U3-theraphotoxin-Hhn1a 5 of Cyriopagopus hainanus (Chinese bird spider).